The following is a 277-amino-acid chain: Undecaprenyl-diphosphatase (277 aa).

The next 6 helical transmembrane spans lie at Met-88 to Asp-108, Met-117 to Val-137, Phe-157 to Leu-179, Ser-191 to Val-211, Leu-227 to Val-247, and Phe-255 to Ile-275.

The protein belongs to the UppP family.

The protein resides in the cell membrane. It catalyses the reaction di-trans,octa-cis-undecaprenyl diphosphate + H2O = di-trans,octa-cis-undecaprenyl phosphate + phosphate + H(+). Catalyzes the dephosphorylation of undecaprenyl diphosphate (UPP). Confers resistance to bacitracin. This Pseudarthrobacter chlorophenolicus (strain ATCC 700700 / DSM 12829 / CIP 107037 / JCM 12360 / KCTC 9906 / NCIMB 13794 / A6) (Arthrobacter chlorophenolicus) protein is Undecaprenyl-diphosphatase.